Consider the following 473-residue polypeptide: Glutamate--tRNA ligase (473 aa).

A 'HIGH' region motif is present at residues proline 10 to asparagine 20. Zn(2+)-binding residues include cysteine 98, cysteine 100, cysteine 125, and histidine 127. Positions lysine 242 to arginine 246 match the 'KMSKS' region motif. Residue lysine 245 participates in ATP binding.

This sequence belongs to the class-I aminoacyl-tRNA synthetase family. Glutamate--tRNA ligase type 1 subfamily. As to quaternary structure, monomer. Zn(2+) is required as a cofactor.

It is found in the cytoplasm. The enzyme catalyses tRNA(Glu) + L-glutamate + ATP = L-glutamyl-tRNA(Glu) + AMP + diphosphate. Catalyzes the attachment of glutamate to tRNA(Glu) in a two-step reaction: glutamate is first activated by ATP to form Glu-AMP and then transferred to the acceptor end of tRNA(Glu). The chain is Glutamate--tRNA ligase from Aquifex aeolicus (strain VF5).